Here is a 432-residue protein sequence, read N- to C-terminus: D-amino acid dehydrogenase (432 aa).

FAD is bound at residue 3-17 (VVILGSGVVGVASAW).

It belongs to the DadA oxidoreductase family. It depends on FAD as a cofactor.

It catalyses the reaction a D-alpha-amino acid + A + H2O = a 2-oxocarboxylate + AH2 + NH4(+). Its pathway is amino-acid degradation; D-alanine degradation; NH(3) and pyruvate from D-alanine: step 1/1. Functionally, oxidative deamination of D-amino acids. This chain is D-amino acid dehydrogenase, found in Klebsiella pneumoniae (strain 342).